The sequence spans 406 residues: Dual-specificity RNA methyltransferase RlmN (406 aa).

The active-site Proton acceptor is the E121. Residues 127-377 form the Radical SAM core domain; the sequence is ERDRGTLCVS…VRTPRGRDIL (251 aa). A disulfide bond links C134 and C380. The [4Fe-4S] cluster site is built by C141, C145, and C148. Residues 206-207, S238, 260-262, and N337 each bind S-adenosyl-L-methionine; these read GE and SLH. C380 functions as the S-methylcysteine intermediate in the catalytic mechanism.

Belongs to the radical SAM superfamily. RlmN family. Requires [4Fe-4S] cluster as cofactor.

It is found in the cytoplasm. The enzyme catalyses adenosine(2503) in 23S rRNA + 2 reduced [2Fe-2S]-[ferredoxin] + 2 S-adenosyl-L-methionine = 2-methyladenosine(2503) in 23S rRNA + 5'-deoxyadenosine + L-methionine + 2 oxidized [2Fe-2S]-[ferredoxin] + S-adenosyl-L-homocysteine. The catalysed reaction is adenosine(37) in tRNA + 2 reduced [2Fe-2S]-[ferredoxin] + 2 S-adenosyl-L-methionine = 2-methyladenosine(37) in tRNA + 5'-deoxyadenosine + L-methionine + 2 oxidized [2Fe-2S]-[ferredoxin] + S-adenosyl-L-homocysteine. Its function is as follows. Specifically methylates position 2 of adenine 2503 in 23S rRNA and position 2 of adenine 37 in tRNAs. m2A2503 modification seems to play a crucial role in the proofreading step occurring at the peptidyl transferase center and thus would serve to optimize ribosomal fidelity. In Azorhizobium caulinodans (strain ATCC 43989 / DSM 5975 / JCM 20966 / LMG 6465 / NBRC 14845 / NCIMB 13405 / ORS 571), this protein is Dual-specificity RNA methyltransferase RlmN.